Consider the following 124-residue polypeptide: Small ribosomal subunit protein uS12 (124 aa).

The segment at 1-32 (MPTIQQLVRKGRQAKASKTKTPALKGSPQRRG) is disordered. A compositionally biased stretch (basic residues) spans 9–18 (RKGRQAKASK). The residue at position 89 (aspartate 89) is a 3-methylthioaspartic acid.

Belongs to the universal ribosomal protein uS12 family. As to quaternary structure, part of the 30S ribosomal subunit. Contacts proteins S8 and S17. May interact with IF1 in the 30S initiation complex.

With S4 and S5 plays an important role in translational accuracy. In terms of biological role, interacts with and stabilizes bases of the 16S rRNA that are involved in tRNA selection in the A site and with the mRNA backbone. Located at the interface of the 30S and 50S subunits, it traverses the body of the 30S subunit contacting proteins on the other side and probably holding the rRNA structure together. The combined cluster of proteins S8, S12 and S17 appears to hold together the shoulder and platform of the 30S subunit. The sequence is that of Small ribosomal subunit protein uS12 from Acidothermus cellulolyticus (strain ATCC 43068 / DSM 8971 / 11B).